A 356-amino-acid polypeptide reads, in one-letter code: Protein RecA (356 aa).

75–82 serves as a coordination point for ATP; it reads GPESSGKT.

It belongs to the RecA family.

The protein resides in the cytoplasm. Can catalyze the hydrolysis of ATP in the presence of single-stranded DNA, the ATP-dependent uptake of single-stranded DNA by duplex DNA, and the ATP-dependent hybridization of homologous single-stranded DNAs. It interacts with LexA causing its activation and leading to its autocatalytic cleavage. In Burkholderia mallei (strain ATCC 23344), this protein is Protein RecA.